A 302-amino-acid polypeptide reads, in one-letter code: N-acetylmuramic acid 6-phosphate etherase (302 aa).

The region spanning 58-221 (IGKAFLNGGR…STGAMVKTGK (164 aa)) is the SIS domain. The Proton donor role is filled by E86. E117 is a catalytic residue.

It belongs to the GCKR-like family. MurNAc-6-P etherase subfamily. As to quaternary structure, homodimer.

The enzyme catalyses N-acetyl-D-muramate 6-phosphate + H2O = N-acetyl-D-glucosamine 6-phosphate + (R)-lactate. It functions in the pathway amino-sugar metabolism; N-acetylmuramate degradation. In terms of biological role, specifically catalyzes the cleavage of the D-lactyl ether substituent of MurNAc 6-phosphate, producing GlcNAc 6-phosphate and D-lactate. This Clostridium botulinum (strain Loch Maree / Type A3) protein is N-acetylmuramic acid 6-phosphate etherase.